Here is a 320-residue protein sequence, read N- to C-terminus: Cytochrome f (320 aa).

A signal peptide spans 1–35; sequence MQTRNTLSWIREEITRSISVSLMIYIITWASISSA. Heme-binding residues include Y36, C56, C59, and H60. Residues 286–306 form a helical membrane-spanning segment; that stretch reads VQGLLFFLGSVVLAQIFLVLK.

The protein belongs to the cytochrome f family. As to quaternary structure, the 4 large subunits of the cytochrome b6-f complex are cytochrome b6, subunit IV (17 kDa polypeptide, petD), cytochrome f and the Rieske protein, while the 4 small subunits are PetG, PetL, PetM and PetN. The complex functions as a dimer. Heme serves as cofactor.

The protein localises to the plastid. It is found in the chloroplast thylakoid membrane. Its function is as follows. Component of the cytochrome b6-f complex, which mediates electron transfer between photosystem II (PSII) and photosystem I (PSI), cyclic electron flow around PSI, and state transitions. The polypeptide is Cytochrome f (Olimarabidopsis pumila (Dwarf rocket)).